The primary structure comprises 477 residues: Dihydrolipoyl dehydrogenase (477 aa).

FAD contacts are provided by residues Glu-34–Cys-49, Lys-58, and Gly-122. Cysteines 49 and 54 form a disulfide. NAD(+) is bound by residues Gly-188–Ile-192, Glu-211, Val-245, and Ala-276–Arg-279. Asp-319 and Ala-327 together coordinate FAD. The Proton acceptor role is filled by His-451.

This sequence belongs to the class-I pyridine nucleotide-disulfide oxidoreductase family. Homodimer. The cofactor is FAD.

The protein localises to the cytoplasm. The enzyme catalyses N(6)-[(R)-dihydrolipoyl]-L-lysyl-[protein] + NAD(+) = N(6)-[(R)-lipoyl]-L-lysyl-[protein] + NADH + H(+). Its function is as follows. The pyruvate dehydrogenase complex catalyzes the overall conversion of pyruvate to acetyl-CoA and CO(2). It contains multiple copies of three enzymatic components: pyruvate dehydrogenase (E1), dihydrolipoamide acetyltransferase (E2) and lipoamide dehydrogenase (E3). This Azotobacter vinelandii protein is Dihydrolipoyl dehydrogenase.